Reading from the N-terminus, the 345-residue chain is Biotin synthase (345 aa).

One can recognise a Radical SAM core domain in the interval 66–291; that stretch reads PEVEVEGIIS…RTMLRFAGGR (226 aa). Positions 81, 85, and 88 each coordinate [4Fe-4S] cluster. [2Fe-2S] cluster contacts are provided by Cys124, Cys157, Cys216, and Arg286.

Belongs to the radical SAM superfamily. Biotin synthase family. Homodimer. [4Fe-4S] cluster serves as cofactor. It depends on [2Fe-2S] cluster as a cofactor.

It carries out the reaction (4R,5S)-dethiobiotin + (sulfur carrier)-SH + 2 reduced [2Fe-2S]-[ferredoxin] + 2 S-adenosyl-L-methionine = (sulfur carrier)-H + biotin + 2 5'-deoxyadenosine + 2 L-methionine + 2 oxidized [2Fe-2S]-[ferredoxin]. It functions in the pathway cofactor biosynthesis; biotin biosynthesis; biotin from 7,8-diaminononanoate: step 2/2. In terms of biological role, catalyzes the conversion of dethiobiotin (DTB) to biotin by the insertion of a sulfur atom into dethiobiotin via a radical-based mechanism. The chain is Biotin synthase from Mycobacterium avium (strain 104).